Here is a 113-residue protein sequence, read N- to C-terminus: MPFQSSVGDYQTVATLETFGFLPPMTQEEIYDQIAYIIAQGWSPVIEHVHPSGSMQTYWSYWKLPFFGEKDLNLVVSELEACHRAYPDHHVRIIGYDAYTQSQGTAFAVFQGR.

Belongs to the RuBisCO small chain family. In terms of assembly, heterohexadecamer of 8 large and 8 small subunits. Forms a CsoS2-CsoS1-RuBisCO complex.

The protein resides in the carboxysome. In terms of biological role, ruBisCO catalyzes two reactions: the carboxylation of D-ribulose 1,5-bisphosphate, the primary event in carbon dioxide fixation, as well as the oxidative fragmentation of the pentose substrate in the photorespiration process. Both reactions occur simultaneously and in competition at the same active site. Although the small subunit is not catalytic it is essential for maximal activity. There are estimated to be 152 RuBisCO holoenzymes per carboxysome. The sequence is that of Ribulose bisphosphate carboxylase small subunit from Prochlorococcus marinus subsp. pastoris (strain CCMP1986 / NIES-2087 / MED4).